The primary structure comprises 308 residues: Apolipoprotein F (308 aa).

This sequence belongs to the apolipoprotein F family.

The protein resides in the secreted. In terms of biological role, minor apolipoprotein that associates with LDL. Inhibits cholesteryl ester transfer protein (CETP) activity and appears to be an important regulator of cholesterol transport. Also associates to a lesser degree with VLDL, Apo-AI and Apo-AII. This Rattus norvegicus (Rat) protein is Apolipoprotein F (Apof).